The primary structure comprises 273 residues: Shikimate dehydrogenase (NADP(+)) (273 aa).

Shikimate-binding positions include 15-17 (SKS) and Thr62. Residue Lys66 is the Proton acceptor of the active site. Glu78 contacts NADP(+). Shikimate contacts are provided by Asn87 and Asp103. NADP(+) contacts are provided by residues 127–131 (GAGGA), 150–155 (NRTQEK), and Met213. Tyr215 provides a ligand contact to shikimate. Gly237 lines the NADP(+) pocket.

Belongs to the shikimate dehydrogenase family. Homodimer.

It carries out the reaction shikimate + NADP(+) = 3-dehydroshikimate + NADPH + H(+). The protein operates within metabolic intermediate biosynthesis; chorismate biosynthesis; chorismate from D-erythrose 4-phosphate and phosphoenolpyruvate: step 4/7. Involved in the biosynthesis of the chorismate, which leads to the biosynthesis of aromatic amino acids. Catalyzes the reversible NADPH linked reduction of 3-dehydroshikimate (DHSA) to yield shikimate (SA). In Shewanella woodyi (strain ATCC 51908 / MS32), this protein is Shikimate dehydrogenase (NADP(+)).